We begin with the raw amino-acid sequence, 133 residues long: Small ribosomal subunit protein uS11 (133 aa).

The protein belongs to the universal ribosomal protein uS11 family. Part of the 30S ribosomal subunit. Interacts with proteins S7 and S18. Binds to IF-3.

In terms of biological role, located on the platform of the 30S subunit, it bridges several disparate RNA helices of the 16S rRNA. Forms part of the Shine-Dalgarno cleft in the 70S ribosome. The chain is Small ribosomal subunit protein uS11 from Brevibacillus brevis (strain 47 / JCM 6285 / NBRC 100599).